Here is a 274-residue protein sequence, read N- to C-terminus: Protein STAY-GREEN, chloroplastic (274 aa).

Residues 1–48 (MAAATSTMSLLPPITQQQRWHAADSLVVLASRCHNSRRRRRCRYVVPR) constitute a chloroplast transit peptide.

Belongs to the staygreen family. Interacts with LHCII complex. Expressed in leaves, roots and developing seeds.

The protein localises to the plastid. It localises to the chloroplast membrane. Its subcellular location is the chloroplast stroma. Its function is as follows. Involved in the disassembling mechanism of the intact light-harvesting complex of photosystem II (LHCII) in the thylakoid membranes. Required to trigger chlorophyll degradation during natural and dark-induced leaf senescence. The protein is Protein STAY-GREEN, chloroplastic (SGR) of Oryza sativa subsp. japonica (Rice).